We begin with the raw amino-acid sequence, 197 residues long: Ribonuclease HII (197 aa).

Residues 9–197 enclose the RNase H type-2 domain; it reads ELIAGVDEVG…APVKKALEQF (189 aa). Residues D15, E16, and D107 each coordinate a divalent metal cation.

The protein belongs to the RNase HII family. It depends on Mn(2+) as a cofactor. Mg(2+) serves as cofactor.

The protein localises to the cytoplasm. The enzyme catalyses Endonucleolytic cleavage to 5'-phosphomonoester.. In terms of biological role, endonuclease that specifically degrades the RNA of RNA-DNA hybrids. The sequence is that of Ribonuclease HII from Haemophilus influenzae (strain PittGG).